We begin with the raw amino-acid sequence, 366 residues long: tRNA/tmRNA (uracil-C(5))-methyltransferase (366 aa).

Positions 190, 218, 223, 239, and 299 each coordinate S-adenosyl-L-methionine. The active-site Nucleophile is Cys324. Residue Glu358 is the Proton acceptor of the active site.

Belongs to the class I-like SAM-binding methyltransferase superfamily. RNA M5U methyltransferase family. TrmA subfamily.

The enzyme catalyses uridine(54) in tRNA + S-adenosyl-L-methionine = 5-methyluridine(54) in tRNA + S-adenosyl-L-homocysteine + H(+). The catalysed reaction is uridine(341) in tmRNA + S-adenosyl-L-methionine = 5-methyluridine(341) in tmRNA + S-adenosyl-L-homocysteine + H(+). Dual-specificity methyltransferase that catalyzes the formation of 5-methyluridine at position 54 (m5U54) in all tRNAs, and that of position 341 (m5U341) in tmRNA (transfer-mRNA). This chain is tRNA/tmRNA (uracil-C(5))-methyltransferase, found in Enterobacter sp. (strain 638).